Consider the following 474-residue polypeptide: Glutamyl-tRNA(Gln) amidotransferase subunit A (474 aa).

Residues Lys76 and Ser151 each act as charge relay system in the active site. Ser175 (acyl-ester intermediate) is an active-site residue.

This sequence belongs to the amidase family. GatA subfamily. In terms of assembly, heterotrimer of A, B and C subunits.

The catalysed reaction is L-glutamyl-tRNA(Gln) + L-glutamine + ATP + H2O = L-glutaminyl-tRNA(Gln) + L-glutamate + ADP + phosphate + H(+). In terms of biological role, allows the formation of correctly charged Gln-tRNA(Gln) through the transamidation of misacylated Glu-tRNA(Gln) in organisms which lack glutaminyl-tRNA synthetase. The reaction takes place in the presence of glutamine and ATP through an activated gamma-phospho-Glu-tRNA(Gln). The polypeptide is Glutamyl-tRNA(Gln) amidotransferase subunit A (Chlorobium chlorochromatii (strain CaD3)).